Reading from the N-terminus, the 1450-residue chain is Sister chromatid cohesion protein PDS5 homolog (1450 aa).

Disordered stretches follow at residues 1-145 (MATR…KETK), 680-707 (VGGS…QQQQ), and 1340-1450 (LPPL…EVEN). The segment covering 45-59 (DDGELDSDIDEEDES) has biased composition (acidic residues). Over residues 77-138 (KTQQQPQKSI…TSSSSQQSTQ (62 aa)) the composition is skewed to low complexity. The stretch at 650 to 716 (KQLFKKYLEE…QLQQPENDIE (67 aa)) forms a coiled coil. The span at 682-691 (GSTTPTSKKS) shows a compositional bias: polar residues. Low complexity-rich tracts occupy residues 692-707 (QPPQ…QQQQ) and 1350-1363 (NNNN…STNN). Basic and acidic residues predominate over residues 1369–1378 (DENNNNKNDN). The segment covering 1387–1401 (NSTTAVPQKSIISKP) has biased composition (low complexity). Over residues 1402 to 1427 (PAKKVSKKAAAKQKSPKKKTNKKKKQ) the composition is skewed to basic residues. A compositionally biased stretch (acidic residues) spans 1430–1450 (SEEEVSSSEEEDESQDEEVEN).

The protein belongs to the PDS5 family.

It is found in the nucleus. Functionally, may regulate sister chromatid cohesion during mitosis and couple it to DNA replication. The protein is Sister chromatid cohesion protein PDS5 homolog of Dictyostelium discoideum (Social amoeba).